Reading from the N-terminus, the 201-residue chain is Keratin-associated protein 4-12 (201 aa).

Repeat copies occupy residues 5–9 (CCGSV), 20–24 (CCRPS), 25–29 (CCQTT), 30–34 (CCRTT), 35–39 (CCRPS), 40–44 (CCVSS), 45–49 (CCRPQ), 50–54 (CCQSV), 55–59 (CCQPT), 60–64 (CCRPS), 65–69 (CCQTT), 70–74 (CCRTT), 75–79 (CCRPS), 80–84 (CCVSS), 85–89 (CCRPQ), 90–94 (CCQSV), 95–99 (CCQPT), 100–104 (CCRPS), 105–109 (CCQTT), 110–114 (CCRTT), 115–119 (CCRPS), 120–124 (CCVSS), 125–129 (CCRPQ), 130–134 (CCQSV), 135–139 (CCQPT), 140–144 (CCRPS), 145–149 (CCISS), 155–159 (CCESS), 160–164 (CCRPC), and 165–169 (CCLRP). The tract at residues 5–169 (CCGSVCSDQG…CCRPCCCLRP (165 aa)) is 31 X 5 AA repeats of C-C-[GRQVIL]-[SPTR]-[VSTQPC].

This sequence belongs to the KRTAP type 4 family. As to quaternary structure, interacts with hair keratins. As to expression, expressed in the hair follicles.

Its function is as follows. In the hair cortex, hair keratin intermediate filaments are embedded in an interfilamentous matrix, consisting of hair keratin-associated proteins (KRTAP), which are essential for the formation of a rigid and resistant hair shaft through their extensive disulfide bond cross-linking with abundant cysteine residues of hair keratins. The matrix proteins include the high-sulfur and high-glycine-tyrosine keratins. This Homo sapiens (Human) protein is Keratin-associated protein 4-12 (KRTAP4-12).